Reading from the N-terminus, the 470-residue chain is Dendritic cell-specific transmembrane protein (470 aa).

Topologically, residues 1–34 are cytoplasmic; sequence MGIWTSGTDIFLSLWEIYVSPRSPGWMDFIQHLG. The helical transmembrane segment at 35-55 threads the bilayer; it reads VCCLVALISVGLLSVAACWFL. At 56–57 the chain is on the extracellular side; sequence PS. A helical transmembrane segment spans residues 58–78; the sequence is IIAAAASWIITCVLLCCSKHA. Residues 79-97 lie on the Cytoplasmic side of the membrane; it reads RCFILLVFLSCGLREGRNA. A helical membrane pass occupies residues 98 to 118; it reads LIAAGTGIVILGHVENIFHNF. At 119-209 the chain is on the extracellular side; the sequence is KGLLDGMTCN…MATTTEVLSS (91 aa). A helical transmembrane segment spans residues 210–230; it reads LGQKLLAFAGLSLVLLGTGLF. Over 231-292 the chain is Cytoplasmic; sequence MKRFLGPCGW…FWPTPKERKN (62 aa). The helical transmembrane segment at 293 to 313 threads the bilayer; sequence LGLFFLPILIHLCIWVLFAAV. The Extracellular segment spans residues 314 to 376; it reads DYLLYRLIFS…PKPKFLLSET (63 aa). A helical membrane pass occupies residues 377 to 397; sequence WVPLSVILLILVMLGLLSSIL. Topologically, residues 398–470 are cytoplasmic; that stretch reads MQLKILVSAS…QMDMASADKS (73 aa).

Monomer. Homodimer. Isoform 1 interacts (via the C-terminus cytoplasmic tail) with OS9 isoform 1 (via the C-terminus tail); the interaction induces DCSTAMP redistribution to the endoplasmic reticulum-Golgi intermediate compartment. Isoform 1 interacts (via the C-terminus cytoplasmic tail) with OS9 isoform 2 (via the C-terminus tail). Interacts with CREB3. Glycosylated. As to expression, preferentially expressed by dendritic cells (DCs). Detected in both immature and mature DCs. Highly expressed in lymph nodes, lung, kidney and liver. Expressed at lower levels in pancreas, bone marrow, spleen, leukocytes, in freshly isolated peripheral blood mononuclear cells (PBMC) and B-cells. Not expressed in freshly isolated monocytes.

It is found in the cell membrane. The protein resides in the endoplasmic reticulum membrane. The protein localises to the endoplasmic reticulum-Golgi intermediate compartment membrane. It localises to the endosome. Functionally, probable cell surface receptor that plays several roles in cellular fusion, cell differentiation, bone and immune homeostasis. Plays a role in TNFSF11-mediated osteoclastogenesis. Cooperates with OCSTAMP in modulating cell-cell fusion in both osteoclasts and foreign body giant cells (FBGCs). Participates in osteoclast bone resorption. Involved in inducing the expression of tartrate-resistant acid phosphatase in osteoclast precursors. Plays a role in haematopoietic stem cell differentiation of bone marrow cells toward the myeloid lineage. Inhibits the development of neutrophilic granulocytes. Plays also a role in the regulation of dendritic cell (DC) antigen presentation activity by controlling phagocytic activity. Involved in the maintenance of immune self-tolerance and avoidance of autoimmune reactions. The chain is Dendritic cell-specific transmembrane protein (DCSTAMP) from Homo sapiens (Human).